Here is a 224-residue protein sequence, read N- to C-terminus: Small ribosomal subunit protein uS5 (224 aa).

The disordered stretch occupies residues Met-1–Asp-40. Over residues Asp-13 to Asp-40 the composition is skewed to basic and acidic residues. Residues Tyr-44–Val-107 enclose the S5 DRBM domain.

It belongs to the universal ribosomal protein uS5 family. As to quaternary structure, part of the 30S ribosomal subunit. Contacts proteins S4 and S8.

Functionally, with S4 and S12 plays an important role in translational accuracy. Located at the back of the 30S subunit body where it stabilizes the conformation of the head with respect to the body. The chain is Small ribosomal subunit protein uS5 from Mycolicibacterium paratuberculosis (strain ATCC BAA-968 / K-10) (Mycobacterium paratuberculosis).